A 404-amino-acid polypeptide reads, in one-letter code: MKIIVQKFGGTSVKDDKGRKLALGHIKEAISEGYKVVVVVSAMGRKGDPYATDSLLGLLYGDQSAISPREQDLLLSCGETISSVVFTSMLLDNGVKAAALTGAQAGFLTNDQHTNAKIIEMKPERLFSVLANHDAVVVAGFQGATEKGDTTTIGRGGSDTSAAALGAAVDAEYIDIFTDVEGVMTADPRVVENAKPLPVVTYTEICNLAYQGAKVISPRAVEIAMQAKVPIRVRSTYSNDKGTLVTSHHSSKVGSDVFERLITGIAHVKDVTQFKVPAKIGQYNVQTEVFKAMANAGISVDFFNITPSEIVYTVAGNKTETAQRILMDMGYDPMVTRNCAKVSAVGAGIMGVPGVTSKIVSALSEKEIPILQSADSHTTIWVLVHEADMVPAVNALHEVFELSK.

7-10 (KFGG) serves as a coordination point for ATP. 25–30 (HIKEAI) is a substrate binding site. Ser-41 contributes to the ATP binding site. Substrate is bound by residues 52 to 54 (TDS), Glu-79, 130 to 131 (LA), 155 to 158 (RGGS), and Ser-158. Residues 178-179 (TD) and 184-189 (MTADPR) each bind ATP. Residues 299-301 (SVD), 355-356 (VT), 369-370 (PI), and 376-377 (SH) each bind substrate. Positions 344–404 (AVGAGIMGVP…ALHEVFELSK (61 aa)) constitute an ACT domain.

Belongs to the aspartokinase family. Tetramer consisting of 2 isoforms Alpha (catalytic) and 2 isoforms Beta (function not known).

It carries out the reaction L-aspartate + ATP = 4-phospho-L-aspartate + ADP. The protein operates within amino-acid biosynthesis; L-lysine biosynthesis via DAP pathway; (S)-tetrahydrodipicolinate from L-aspartate: step 1/4. Its pathway is amino-acid biosynthesis; L-methionine biosynthesis via de novo pathway; L-homoserine from L-aspartate: step 1/3. It functions in the pathway amino-acid biosynthesis; L-threonine biosynthesis; L-threonine from L-aspartate: step 1/5. With respect to regulation, diaminopimelate-sensitive. In terms of biological role, catalyzes the phosphorylation of the beta-carboxyl group of aspartic acid with ATP to yield 4-phospho-L-aspartate, which is involved in the branched biosynthetic pathway leading to the biosynthesis of amino acids threonine, isoleucine and methionine. This chain is Aspartokinase 1 (dapG), found in Bacillus subtilis (strain 168).